Reading from the N-terminus, the 857-residue chain is Dimethylglycine dehydrogenase, mitochondrial (857 aa).

A mitochondrion-targeting transit peptide spans 1 to 43 (MLRLGALRLRGLALRSSQGRPSSAGLREGQESPPSPPEWKDRA). A disordered region spans residues 15-39 (RSSQGRPSSAGLREGQESPPSPPEW). Residues 52 to 53 (CV), 73 to 74 (EK), and 80 to 88 (GSTWHAAGL) each bind FAD. Histidine 84 is subject to Tele-8alpha-FAD histidine. The residue at position 107 (lysine 107) is an N6-acetyllysine. N6-acetyllysine; alternate is present on lysine 141. At lysine 141 the chain carries N6-succinyllysine; alternate. Lysine 161 is modified (N6-acetyllysine). Valine 212 contacts FAD. An N6-acetyllysine modification is found at lysine 216. Tryptophan 244 is a binding site for FAD. N6-succinyllysine occurs at positions 310 and 312. N6-acetyllysine occurs at positions 328 and 353. 390–395 (FGYGII) contacts FAD. N6-acetyllysine; alternate is present on residues lysine 427, lysine 469, and lysine 516. Lysine 427, lysine 469, and lysine 516 each carry N6-succinyllysine; alternate. 573–575 (ELT) is a (6S)-5,6,7,8-tetrahydrofolate binding site. Residue lysine 648 is modified to N6-acetyllysine; alternate. Lysine 648 carries the post-translational modification N6-succinyllysine; alternate. Residues tyrosine 669, 676 to 678 (ELY), and tyrosine 737 each bind (6S)-5,6,7,8-tetrahydrofolate. An N6-acetyllysine modification is found at lysine 757. Lysine 786 is modified (N6-acetyllysine; alternate). Lysine 786 is modified (N6-succinyllysine; alternate). Residue lysine 788 is modified to N6-succinyllysine.

This sequence belongs to the GcvT family. FAD serves as cofactor.

The protein localises to the mitochondrion. The enzyme catalyses (6S)-5,6,7,8-tetrahydrofolyl-(gamma-L-Glu)(n) + N,N-dimethylglycine + oxidized [electron-transfer flavoprotein] + H(+) = (6R)-5,10-methylenetetrahydrofolyl-(gamma-L-Glu)(n) + sarcosine + reduced [electron-transfer flavoprotein]. Its pathway is amine and polyamine degradation; betaine degradation; sarcosine from betaine: step 2/2. Catalyzes the demethylation of N,N-dimethylglycine to sarcosine. Also has activity with sarcosine in vitro. In Rattus norvegicus (Rat), this protein is Dimethylglycine dehydrogenase, mitochondrial (Dmgdh).